A 239-amino-acid chain; its full sequence is 4-hydroxy-tetrahydrodipicolinate reductase (239 aa).

Residues 8 to 13 (GSTGKM), 78 to 80 (GTT), and 102 to 105 (SANM) each bind NAD(+). The Proton donor/acceptor role is filled by His134. His135 contributes to the (S)-2,3,4,5-tetrahydrodipicolinate binding site. Lys138 (proton donor) is an active-site residue. 144 to 145 (GT) serves as a coordination point for (S)-2,3,4,5-tetrahydrodipicolinate.

The protein belongs to the DapB family.

The protein resides in the cytoplasm. It carries out the reaction (S)-2,3,4,5-tetrahydrodipicolinate + NAD(+) + H2O = (2S,4S)-4-hydroxy-2,3,4,5-tetrahydrodipicolinate + NADH + H(+). It catalyses the reaction (S)-2,3,4,5-tetrahydrodipicolinate + NADP(+) + H2O = (2S,4S)-4-hydroxy-2,3,4,5-tetrahydrodipicolinate + NADPH + H(+). Its pathway is amino-acid biosynthesis; L-lysine biosynthesis via DAP pathway; (S)-tetrahydrodipicolinate from L-aspartate: step 4/4. Functionally, catalyzes the conversion of 4-hydroxy-tetrahydrodipicolinate (HTPA) to tetrahydrodipicolinate. The polypeptide is 4-hydroxy-tetrahydrodipicolinate reductase (Rickettsia peacockii (strain Rustic)).